Reading from the N-terminus, the 65-residue chain is MKTTILLVILGLTLLFALSAATELKDEERDCKGFQVKCKKDSECCSSYVCGSQWKWCVYPSPFGR.

Residues 1-21 (MKTTILLVILGLTLLFALSAA) form the signal peptide. A propeptide spanning residues 22-29 (TELKDEER) is cleaved from the precursor. Cystine bridges form between Cys31/Cys45, Cys38/Cys50, and Cys44/Cys57.

It belongs to the neurotoxin 10 (Hwtx-1) family. 32 (Jztx-16) subfamily. Expressed by the venom gland.

Its subcellular location is the secreted. Its function is as follows. Probable ion channel inhibitor. The protein is U11-theraphotoxin-Cg1a of Chilobrachys guangxiensis (Chinese earth tiger tarantula).